Consider the following 631-residue polypeptide: 2-isopropylmalate synthase 2, chloroplastic (631 aa).

Residues M1–S46 constitute a chloroplast transit peptide. The Pyruvate carboxyltransferase domain maps to V87 to V360. Residues D96, H293, and N329 each contribute to the a divalent metal cation site.

The protein belongs to the alpha-IPM synthase/homocitrate synthase family. LeuA type 1 subfamily. In terms of assembly, homotetramer. Mg(2+) is required as a cofactor. The cofactor is Mn(2+). In terms of tissue distribution, expressed in roots, stems, leaves, flowers and siliques.

It is found in the plastid. Its subcellular location is the chloroplast. The catalysed reaction is 3-methyl-2-oxobutanoate + acetyl-CoA + H2O = (2S)-2-isopropylmalate + CoA + H(+). Its pathway is amino-acid biosynthesis; L-leucine biosynthesis; L-leucine from 3-methyl-2-oxobutanoate: step 1/4. Its activity is regulated as follows. Feedback inhibition by Leu. Catalyzes the condensation of the acetyl group of acetyl-CoA with 3-methyl-2-oxobutanoate (2-oxoisovalerate) to form 3-carboxy-3-hydroxy-4-methylpentanoate (2-isopropylmalate). Involved in Leu biosynthesis, but does not participate in the chain elongation of glucosinolates. This is 2-isopropylmalate synthase 2, chloroplastic from Arabidopsis thaliana (Mouse-ear cress).